A 135-amino-acid polypeptide reads, in one-letter code: Putative nickel-responsive regulator (135 aa).

Ni(2+) contacts are provided by His79, His90, His92, and Cys98.

The protein belongs to the transcriptional regulatory CopG/NikR family. Ni(2+) serves as cofactor.

Its function is as follows. Transcriptional regulator. This Dictyoglomus turgidum (strain DSM 6724 / Z-1310) protein is Putative nickel-responsive regulator.